Here is a 360-residue protein sequence, read N- to C-terminus: Histidinol-phosphate aminotransferase (360 aa).

Lysine 222 is subject to N6-(pyridoxal phosphate)lysine.

This sequence belongs to the class-II pyridoxal-phosphate-dependent aminotransferase family. Histidinol-phosphate aminotransferase subfamily. As to quaternary structure, homodimer. Pyridoxal 5'-phosphate is required as a cofactor.

It carries out the reaction L-histidinol phosphate + 2-oxoglutarate = 3-(imidazol-4-yl)-2-oxopropyl phosphate + L-glutamate. It functions in the pathway amino-acid biosynthesis; L-histidine biosynthesis; L-histidine from 5-phospho-alpha-D-ribose 1-diphosphate: step 7/9. This is Histidinol-phosphate aminotransferase from Listeria monocytogenes serotype 4b (strain F2365).